We begin with the raw amino-acid sequence, 498 residues long: Glutathione synthetase large chain (498 aa).

Arg-128 contacts substrate. Glu-146 is a binding site for ATP. Glu-146 and Asn-148 together coordinate Mg(2+). Substrate contacts are provided by residues 150–153 (ISVS), 233–235 (ERN), Gln-239, and 291–294 (RVGY). Lys-330 contacts ATP. The residue at position 356 (Ser-356) is a Phosphoserine. ATP-binding positions include 387 to 396 (KPQREGGGNN), Tyr-398, 420 to 423 (MRYI), and Glu-446. A Mg(2+)-binding site is contributed by Glu-391. Arg-473 contacts substrate. Lys-475 and Glu-481 together coordinate ATP. Substrate is bound at residue 484 to 485 (VA).

It belongs to the eukaryotic GSH synthase family. As to quaternary structure, heterodimer composed of a large and a small chain. It depends on Mg(2+) as a cofactor.

The enzyme catalyses gamma-L-glutamyl-L-cysteine + glycine + ATP = glutathione + ADP + phosphate + H(+). The protein operates within sulfur metabolism; glutathione biosynthesis; glutathione from L-cysteine and L-glutamate: step 2/2. In Schizosaccharomyces pombe (strain 972 / ATCC 24843) (Fission yeast), this protein is Glutathione synthetase large chain (gsa1).